The primary structure comprises 581 residues: MVRNLDDLDFHLPSHAQDMLEGLQRLRSLPKLADVTLLVGDQELPCHRSLLALNSPYFHAMFAGDFTESFLARVELRDVEPAMVGQLVDFVYTGRLTITQANVEALTRSASRLNFPTVQKVCGRYLQQQLDATNCLGICEFGEQQGLLGVAAKAWAFLRENFEAVAQEDEFLQLARDRLATCLASDLLQVQPEQSRLEALLRWVRHDPQDRAAHLPELLSLVHLDAVPRPCVQQLLATEPLIQESEACQEALSQGHSEELPGLPQKMQEVLVVVGGRALEEDEDGGEEPSHHTGNFAFYNTKARQWMALPDFPDYHKWGFSLAALNSDVYVTGGSRGTKTDTWSTTQAWCFPLKEAIWKPVAPMLKARTNHASTALNGEIYAIGGTALDAVEVERYDPYTDSWAPVGPAPKYVSNFSAAGCQGRLYLVGSSACKYNMLALQCYSPVTDAWSVIASPFLPKYLSSPRCAALNGALYLIGDNTKKVYVYDPGANLWQKVQSQHSLHENGALVPLGDLLYVTGGRWQGMDGDYHVEMEAYDTVRDAWARHGSLPRLWLYHGASTIFLDVSKWTQPFIPTAPQEH.

A BTB domain is found at 33–100 (ADVTLLVGDQ…VYTGRLTITQ (68 aa)). The 103-residue stretch at 135–237 (CLGICEFGEQ…PRPCVQQLLA (103 aa)) folds into the BACK domain. Kelch repeat units lie at residues 280–327 (EEDE…ALNS), 328–378 (DVYV…ALNG), 379–423 (EIYA…GCQG), 425–472 (LYLV…ALNG), 474–514 (LYLI…PLGD), and 515–564 (LLYV…TIFL).

The protein is Kelch-like protein 30 (Klhl30) of Mus musculus (Mouse).